The following is a 185-amino-acid chain: Homeobox expressed in ES cells 1 (185 aa).

Positions 108-167 (GRRPRTAFTQNQIEVLENVFRVNCYPGIDIREDLAQKLNLEEDRIQIWFQNRRAKLKRSH) form a DNA-binding region, homeobox.

Belongs to the ANF homeobox family. As to quaternary structure, can form heterodimers with PROP1 in binding to DNA. Interacts with TLE1.

Its subcellular location is the nucleus. Functionally, required for the normal development of the forebrain, eyes and other anterior structures such as the olfactory placodes and pituitary gland. Possible transcriptional repressor. Binds to the palindromic PIII sequence, 5'-AGCTTGAGTCTAATTGAATTAACTGTAC-3'. HESX1 and PROP1 bind as heterodimers on this palindromic site, and, in vitro, HESX1 can antagonize PROP1 activation. This is Homeobox expressed in ES cells 1 (HESX1) from Pan paniscus (Pygmy chimpanzee).